Here is a 128-residue protein sequence, read N- to C-terminus: Cytochrome c-type biogenesis protein CcmE (128 aa).

Topologically, residues Met1–Arg8 are cytoplasmic. A helical; Signal-anchor for type II membrane protein membrane pass occupies residues Leu9 to Asn29. The Periplasmic segment spans residues Leu30–Ser128. Residues His120 and Tyr124 each coordinate heme.

Belongs to the CcmE/CycJ family.

It localises to the cell inner membrane. Its function is as follows. Heme chaperone required for the biogenesis of c-type cytochromes. Transiently binds heme delivered by CcmC and transfers the heme to apo-cytochromes in a process facilitated by CcmF and CcmH. The sequence is that of Cytochrome c-type biogenesis protein CcmE from Rickettsia felis (strain ATCC VR-1525 / URRWXCal2) (Rickettsia azadi).